A 61-amino-acid polypeptide reads, in one-letter code: uncharacterized protein (61 aa).

The helical transmembrane segment at 10-27 threads the bilayer; that stretch reads RILFFFFIFFTLFLFNIP.

The protein resides in the membrane. This is an uncharacterized protein from Dictyostelium discoideum (Social amoeba).